The chain runs to 84 residues: MERNLRKERVGVVSSNKMDKTITVAVKWKEKHPIYGKFVNKTKKYHAHDEKNECGIGDTVRIMETRPLSRTKRWRLTEIIERAK.

This sequence belongs to the universal ribosomal protein uS17 family. Part of the 30S ribosomal subunit.

Functionally, one of the primary rRNA binding proteins, it binds specifically to the 5'-end of 16S ribosomal RNA. The chain is Small ribosomal subunit protein uS17 from Porphyromonas gingivalis (strain ATCC 33277 / DSM 20709 / CIP 103683 / JCM 12257 / NCTC 11834 / 2561).